The chain runs to 457 residues: TnpB-like protein ORF457 (457 aa).

The segment at 1-22 (MPPSSGQLLGDEEREPTSTPAI) is disordered.

The protein in the N-terminal section; belongs to the transposase 2 family. In the C-terminal section; belongs to the transposase 35 family.

The polypeptide is TnpB-like protein ORF457 (Acidianus two-tailed virus (ATV)).